Consider the following 795-residue polypeptide: Histone acetyltransferase KAT2A (795 aa).

Polar residues predominate over residues 1-18 (MADPAAQSSAQPRLQQAQ). The disordered stretch occupies residues 1–55 (MADPAAQSSAQPRLQQAQSSGPTGSNSNPGAGSSDPARPGLSQQQWSSQKKAQVR). The span at 19-34 (SSGPTGSNSNPGAGSS) shows a compositional bias: low complexity. Residues 461-614 (VIGNSLSQKS…GATLMECELN (154 aa)) form the N-acetyltransferase domain. The active-site Proton donor/acceptor is glutamate 533. Residues 537 to 539 (CAV), 544 to 550 (QVKGYGT), and tyrosine 575 each bind acetyl-CoA. Succinyl-CoA-binding positions include 537–539 (CAV), 544–550 (QVKGYGT), and tyrosine 575. Residues 597 to 606 (LGYIKDYEGA) form a loop 3 region. One can recognise a Bromo domain in the interval 686–790 (KDPDLLYNML…KFFYFKLKEA (105 aa)).

The protein belongs to the acetyltransferase family. GCN5 subfamily.

The protein localises to the nucleus. It localises to the chromosome. The protein resides in the cytoplasm. Its subcellular location is the cytoskeleton. It is found in the microtubule organizing center. The protein localises to the centrosome. The enzyme catalyses L-lysyl-[histone] + acetyl-CoA = N(6)-acetyl-L-lysyl-[histone] + CoA + H(+). It catalyses the reaction L-lysyl-[protein] + acetyl-CoA = N(6)-acetyl-L-lysyl-[protein] + CoA + H(+). The catalysed reaction is succinyl-CoA + L-lysyl-[protein] = N(6)-succinyl-L-lysyl-[protein] + CoA + H(+). It carries out the reaction glutaryl-CoA + L-lysyl-[protein] = N(6)-glutaryl-L-lysyl-[protein] + CoA + H(+). Its function is as follows. Protein lysine acyltransferase that can act as a acetyltransferase, glutaryltransferasesucc, succinyltransferase or malonyltransferase, depending on the context. Acts as a histone lysine succinyltransferase: catalyzes succinylation of histone H3 on 'Lys-79' (H3K79succ), with a maximum frequency around the transcription start sites of genes. Succinylation of histones gives a specific tag for epigenetic transcription activation. Association with the 2-oxoglutarate dehydrogenase complex, which provides succinyl-CoA, is required for histone succinylation. In different complexes, functions either as an acetyltransferase (HAT) or as a succinyltransferase: in the SAGA and ATAC complexes, acts as a histone acetyltransferase. Has significant histone acetyltransferase activity with core histones, but not with nucleosome core particles. Has a a strong preference for acetylation of H3 at 'Lys-9' (H3K9ac). Acetylation of histones gives a specific tag for epigenetic transcription activation. Also acetylates non-histone proteins, such as tbx5. Involved in heart and limb development by mediating acetylation of tbx5. Together with kat2b, required for growth and differentiation of craniofacial cartilage and bone by regulating acetylation of histone H3 at 'Lys-9' (H3K9ac). Also acts as a histone glutaryltransferase: catalyzes glutarylation of histone H4 on 'Lys-91' (H4K91glu), a mark that destabilizes nucleosomes by promoting dissociation of the H2A-H2B dimers from nucleosomes. In Danio rerio (Zebrafish), this protein is Histone acetyltransferase KAT2A.